Consider the following 384-residue polypeptide: Tryptophan--tRNA ligase (384 aa).

Residues 81 to 89 carry the 'HIGH' region motif; sequence PSGPMHIGH. Residues 252–256 carry the 'KMSKS' region motif; it reads KMSAS.

The protein belongs to the class-I aminoacyl-tRNA synthetase family.

Its subcellular location is the cytoplasm. The enzyme catalyses tRNA(Trp) + L-tryptophan + ATP = L-tryptophyl-tRNA(Trp) + AMP + diphosphate + H(+). In Thermococcus onnurineus (strain NA1), this protein is Tryptophan--tRNA ligase.